Here is a 56-residue protein sequence, read N- to C-terminus: Ovomucoid (56 aa).

Residues 6–56 (VDCSEYPKPDCTLEYRPLCGSDNKTYASKCNFCNAVVESNGTLTLSHFGKC) form the Kazal-like domain. Intrachain disulfides connect Cys8/Cys38, Cys16/Cys35, and Cys24/Cys56. A glycan (N-linked (GlcNAc...) asparagine) is linked at Asn45.

Its subcellular location is the secreted. This is Ovomucoid from Callipepla squamata pallida (Blue scaled quail).